Here is an 88-residue protein sequence, read N- to C-terminus: Small ribosomal subunit protein bS16 (88 aa).

It belongs to the bacterial ribosomal protein bS16 family.

The protein is Small ribosomal subunit protein bS16 of Mycoplasma pneumoniae (strain ATCC 29342 / M129 / Subtype 1) (Mycoplasmoides pneumoniae).